Here is a 322-residue protein sequence, read N- to C-terminus: Protein-methionine-sulfoxide reductase catalytic subunit MsrP (322 aa).

Residues 1–59 (MSFRDALNLPSSEITDESVYRDRRRLLQLLALTPALGVAGCAEADPPPPPKTVVTPAQA) constitute a signal peptide (tat-type signal). Residues N79, 82–83 (YE), C137, T172, N220, R225, and 236–238 (SIK) contribute to the Mo-molybdopterin site.

This sequence belongs to the MsrP family. In terms of assembly, heterodimer of a catalytic subunit (MsrP) and a heme-binding subunit (MsrQ). Mo-molybdopterin is required as a cofactor. Post-translationally, predicted to be exported by the Tat system. The position of the signal peptide cleavage has not been experimentally proven.

The protein localises to the periplasm. It carries out the reaction L-methionyl-[protein] + a quinone + H2O = L-methionyl-(S)-S-oxide-[protein] + a quinol. The enzyme catalyses L-methionyl-[protein] + a quinone + H2O = L-methionyl-(R)-S-oxide-[protein] + a quinol. Functionally, part of the MsrPQ system that repairs oxidized periplasmic proteins containing methionine sulfoxide residues (Met-O), using respiratory chain electrons. Thus protects these proteins from oxidative-stress damage caused by reactive species of oxygen and chlorine generated by the host defense mechanisms. MsrPQ is essential for the maintenance of envelope integrity under bleach stress, rescuing a wide series of structurally unrelated periplasmic proteins from methionine oxidation. The catalytic subunit MsrP is non-stereospecific, being able to reduce both (R-) and (S-) diastereoisomers of methionine sulfoxide. The sequence is that of Protein-methionine-sulfoxide reductase catalytic subunit MsrP from Xanthomonas axonopodis pv. citri (strain 306).